Consider the following 574-residue polypeptide: Proline--tRNA ligase (574 aa).

The protein belongs to the class-II aminoacyl-tRNA synthetase family. ProS type 1 subfamily. In terms of assembly, homodimer.

Its subcellular location is the cytoplasm. It catalyses the reaction tRNA(Pro) + L-proline + ATP = L-prolyl-tRNA(Pro) + AMP + diphosphate. In terms of biological role, catalyzes the attachment of proline to tRNA(Pro) in a two-step reaction: proline is first activated by ATP to form Pro-AMP and then transferred to the acceptor end of tRNA(Pro). As ProRS can inadvertently accommodate and process non-cognate amino acids such as alanine and cysteine, to avoid such errors it has two additional distinct editing activities against alanine. One activity is designated as 'pretransfer' editing and involves the tRNA(Pro)-independent hydrolysis of activated Ala-AMP. The other activity is designated 'posttransfer' editing and involves deacylation of mischarged Ala-tRNA(Pro). The misacylated Cys-tRNA(Pro) is not edited by ProRS. In Nitratidesulfovibrio vulgaris (strain DP4) (Desulfovibrio vulgaris), this protein is Proline--tRNA ligase.